Consider the following 423-residue polypeptide: MAKKDAYKLTYNTSDTLFATNLGDILAPSFASIKQTRNLLGFSSGVDSTALFFLLLECEIPFDIAIVHYHTRLQADDEVAYAKELAATYNKLCFVAHAPHFNANFESNARSFRFDFFQSLIIKHHYTHLLLAHQLNDRLEWLLMQLTKGAGLGNLLGFADERYNYDKSLNNYTIVRPLESIPKNELYRFCKERGIKYFEDSSNQDKTFRRNYFRYEFCDKLVNEFSAGIARSLSYLQRDRQSLENMLYADTLELESLKMQILRQIHNISVPMHTHKICCIIFSIHKSKVQDDENLLLLFCDKVAKQCGYVLSAAQRDEISKSRFNCKIAHFIITSNTHRIYIAQDSMSMYKIVTQSPMSKKFKIFCASHRVPSKLRFLLWAEFCAWEMLCKSAYADADYLVNEQGNQHLFTHFLAKIDNFFTL.

43–48 (SSGVDS) contributes to the ATP binding site.

Belongs to the tRNA(Ile)-lysidine synthase family.

The protein localises to the cytoplasm. It carries out the reaction cytidine(34) in tRNA(Ile2) + L-lysine + ATP = lysidine(34) in tRNA(Ile2) + AMP + diphosphate + H(+). Functionally, ligates lysine onto the cytidine present at position 34 of the AUA codon-specific tRNA(Ile) that contains the anticodon CAU, in an ATP-dependent manner. Cytidine is converted to lysidine, thus changing the amino acid specificity of the tRNA from methionine to isoleucine. The polypeptide is tRNA(Ile)-lysidine synthase (Helicobacter hepaticus (strain ATCC 51449 / 3B1)).